The primary structure comprises 439 residues: Probable glycine dehydrogenase (decarboxylating) subunit 1 (439 aa).

It belongs to the GcvP family. N-terminal subunit subfamily. The glycine cleavage system is composed of four proteins: P, T, L and H. In this organism, the P 'protein' is a heterodimer of two subunits.

It carries out the reaction N(6)-[(R)-lipoyl]-L-lysyl-[glycine-cleavage complex H protein] + glycine + H(+) = N(6)-[(R)-S(8)-aminomethyldihydrolipoyl]-L-lysyl-[glycine-cleavage complex H protein] + CO2. Functionally, the glycine cleavage system catalyzes the degradation of glycine. The P protein binds the alpha-amino group of glycine through its pyridoxal phosphate cofactor; CO(2) is released and the remaining methylamine moiety is then transferred to the lipoamide cofactor of the H protein. The polypeptide is Probable glycine dehydrogenase (decarboxylating) subunit 1 (Aquifex aeolicus (strain VF5)).